A 177-amino-acid chain; its full sequence is ATP synthase subunit delta (177 aa).

Belongs to the ATPase delta chain family. F-type ATPases have 2 components, F(1) - the catalytic core - and F(0) - the membrane proton channel. F(1) has five subunits: alpha(3), beta(3), gamma(1), delta(1), epsilon(1). F(0) has three main subunits: a(1), b(2) and c(10-14). The alpha and beta chains form an alternating ring which encloses part of the gamma chain. F(1) is attached to F(0) by a central stalk formed by the gamma and epsilon chains, while a peripheral stalk is formed by the delta and b chains.

It localises to the cell inner membrane. Functionally, f(1)F(0) ATP synthase produces ATP from ADP in the presence of a proton or sodium gradient. F-type ATPases consist of two structural domains, F(1) containing the extramembraneous catalytic core and F(0) containing the membrane proton channel, linked together by a central stalk and a peripheral stalk. During catalysis, ATP synthesis in the catalytic domain of F(1) is coupled via a rotary mechanism of the central stalk subunits to proton translocation. This protein is part of the stalk that links CF(0) to CF(1). It either transmits conformational changes from CF(0) to CF(1) or is implicated in proton conduction. The protein is ATP synthase subunit delta of Herminiimonas arsenicoxydans.